The primary structure comprises 470 residues: Aminoacyl transferase sphA (470 aa).

Pyridoxal 5'-phosphate contacts are provided by Ser212, His244, and Thr272. Lys275 is modified (N6-(pyridoxal phosphate)lysine).

It belongs to the class-II pyridoxal-phosphate-dependent aminotransferase family. BioF subfamily. In terms of assembly, homodimer. It depends on pyridoxal 5'-phosphate as a cofactor.

It participates in secondary metabolite biosynthesis. In terms of biological role, aminoacyl transferase; part of the gene cluster that mediates the biosynthesis of sphingofungins, bioactive molecules acting as sphingolipid inhibitors via inhibiting serine palmitoyl transferase (SPT). Within the pathway, sphA transfers 2-methyl-aminomalonate and 2-hydroxymethyl-aminomalonate onto the sphB product 3-hydroxyoctadeca-4,10-dienoyl-ACP to produce the precursors of sphingofungins E and F. The substrate specificity of sphA using 2-methyl-aminomalonate and 2-hydroxymethyl-aminomalonate instread of aminomalonate is responsible for the biosynthesis of sphingofungins E and F but not B and C like in Aspergillus fumigatus. The PKS sphB does not contain any putative thioesterase domain for releasing the nascent polyketide chain and it has been suggested that aminoacyl transferases can facilitate the polyketide chain release. The sequence is that of Aminoacyl transferase sphA from Byssochlamys spectabilis (Paecilomyces variotii).